Here is a 215-residue protein sequence, read N- to C-terminus: FGFR1 oncogene partner 2 homolog (215 aa).

The stretch at Ala12–Ser186 forms a coiled coil. The disordered stretch occupies residues Glu193–Ser215.

The protein belongs to the SIKE family.

It localises to the cytoplasm. This chain is FGFR1 oncogene partner 2 homolog (fgfr1op2), found in Xenopus laevis (African clawed frog).